The chain runs to 70 residues: Small ribosomal subunit protein bS21 (70 aa).

Belongs to the bacterial ribosomal protein bS21 family.

In Paracidovorax citrulli (strain AAC00-1) (Acidovorax citrulli), this protein is Small ribosomal subunit protein bS21.